A 343-amino-acid polypeptide reads, in one-letter code: MEAGIVEAAGMDWEAFQTVAWTLVKIMALVVPLMLGVAYLTYAERKIIGWMQVRIGPNRVGFQGLLQPIADAVKLLMKEIIIPSGASRALFILGPILAIAPALAAWAVIPFSDGLVLADINAGLLYVMAITSMGVYGVIIAGWASNSKYAFLGAMRSAAQIVSYEIAMGFALVGVLMASQSLNLSAIVQGQAGGIQQWYLWPLFPLFVVYLVAGVAETNRAPFDVAEGESEIVAGFHVEYSGMAFAVFFLAEYANMILVAALTTLMFLGGWLSPVAFLPDGIVWWLLKTGFVLFLFLWFRATFPRYRYDQIMRLGWKVFIPITIVWIVFVGGMMQTPYGHLFH.

A run of 8 helical transmembrane segments spans residues 19 to 39 (VAWT…GVAY), 89 to 109 (ALFI…WAVI), 124 to 144 (LLYV…AGWA), 158 to 178 (AAQI…VLMA), 198 to 218 (WYLW…VAET), 257 to 277 (ILVA…PVAF), 279 to 299 (PDGI…FLWF), and 314 to 334 (LGWK…GGMM).

The protein belongs to the complex I subunit 1 family. As to quaternary structure, NDH-1 is composed of 14 different subunits. Subunits NuoA, H, J, K, L, M, N constitute the membrane sector of the complex.

The protein resides in the cell inner membrane. It carries out the reaction a quinone + NADH + 5 H(+)(in) = a quinol + NAD(+) + 4 H(+)(out). NDH-1 shuttles electrons from NADH, via FMN and iron-sulfur (Fe-S) centers, to quinones in the respiratory chain. The immediate electron acceptor for the enzyme in this species is believed to be ubiquinone. Couples the redox reaction to proton translocation (for every two electrons transferred, four hydrogen ions are translocated across the cytoplasmic membrane), and thus conserves the redox energy in a proton gradient. This subunit may bind ubiquinone. This chain is NADH-quinone oxidoreductase subunit H, found in Thiobacillus denitrificans (strain ATCC 25259 / T1).